The chain runs to 275 residues: Exosome complex component Rrp42 (275 aa).

This sequence belongs to the RNase PH family. Rrp42 subfamily. In terms of assembly, component of the archaeal exosome complex. Forms a hexameric ring-like arrangement composed of 3 Rrp41-Rrp42 heterodimers. The hexameric ring associates with a trimer of Rrp4 and/or Csl4 subunits.

The protein localises to the cytoplasm. Non-catalytic component of the exosome, which is a complex involved in RNA degradation. Contributes to the structuring of the Rrp41 active site. The chain is Exosome complex component Rrp42 from Saccharolobus solfataricus (strain ATCC 35092 / DSM 1617 / JCM 11322 / P2) (Sulfolobus solfataricus).